A 76-amino-acid chain; its full sequence is Large ribosomal subunit protein bL28 (76 aa).

Residues 21 to 42 form a disordered region; the sequence is RGKAKKEGGVGKHITKTSRRRQ. A compositionally biased stretch (basic residues) spans 33-42; sequence HITKTSRRRQ.

It belongs to the bacterial ribosomal protein bL28 family.

This Halothermothrix orenii (strain H 168 / OCM 544 / DSM 9562) protein is Large ribosomal subunit protein bL28.